The primary structure comprises 298 residues: ADP/ATP translocase 1 (298 aa).

Residues 1–7 (MGDHAWS) are Mitochondrial intermembrane-facing. G2 carries the post-translational modification N-acetylglycine. The stretch at 6-98 (WSFLKDFLAG…FAFKDKYKQL (93 aa)) is one Solcar 1 repeat. S7 carries the post-translational modification Phosphoserine. A helical membrane pass occupies residues 8 to 37 (FLKDFLAGGVAAAVSKTAVAPIERVKLLLQ). The Mitochondrial matrix portion of the chain corresponds to 38-74 (VQHASKQISAEKQYKGIIDCVVRIPKEQGFLSFWRGN). Position 52 is an N6,N6,N6-trimethyllysine (K52). A helical transmembrane segment spans residues 75–99 (LANVIRYFPTQALNFAFKDKYKQLF). ADP is bound by residues R80 and K92. At 100 to 109 (LGGVDRHKQF) the chain is on the mitochondrial intermembrane side. Residues 110–130 (WRYFAGNLASGGAAGATSLCF) form a helical membrane-spanning segment. Solcar repeat units lie at residues 111 to 201 (RYFA…AKGM) and 212 to 297 (VSWM…IKKY). Over 131–178 (VYPLDFARTRLAADVGKGAAQREFHGLGDCIIKIFKSDGLRGLYQGFN) the chain is Mitochondrial matrix. K147 carries the post-translational modification N6-succinyllysine. C160 carries the S-nitrosocysteine modification. Residues 179 to 199 (VSVQGIIIYRAAYFGVYDTAK) traverse the membrane as a helical segment. Over 200–210 (GMLPDPKNVHI) the chain is Mitochondrial intermembrane. A helical transmembrane segment spans residues 211–231 (FVSWMIAQSVTAVAGLVSYPF). At 232-273 (DTVRRRMMMQSGRKGADIMYTGTVDCWRKIAKDEGAKAFFKG) the chain is on the mitochondrial matrix side. ADP is bound at residue R235. Residues 235-240 (RRRMMM) are important for transport activity. Positions 235-240 (RRRMMM) match the Nucleotide carrier signature motif motif. An N6-succinyllysine mark is found at K245 and K272. Residues 274-291 (AWSNVLRGMGGAFVLVLY) traverse the membrane as a helical segment. Residues 292-298 (DEIKKYV) are Mitochondrial intermembrane-facing.

It belongs to the mitochondrial carrier (TC 2.A.29) family. As to quaternary structure, monomer. Found in a complex with ARL2, ARL2BP and SLC25A4/ANT1. Interacts with ARL2BP. Interacts with ARHGAP11B, thereby inhibiting the mitochondrial permeability transition pore (mPTP). Interacts with TIMM44; leading to inhibit the presequence translocase TIMM23, thereby promoting stabilization of PINK1. (Microbial infection) Interacts with HIV-1 Vpr. In terms of processing, under cell death induction, transglutaminated by TGM2. Transglutamination leads to formation of covalent cross-links between a glutamine and the epsilon-amino group of a lysine residue, forming polymers. Expressed in erythrocytes (at protein level).

Its subcellular location is the mitochondrion inner membrane. It is found in the membrane. The catalysed reaction is ADP(in) + ATP(out) = ADP(out) + ATP(in). The enzyme catalyses H(+)(in) = H(+)(out). With respect to regulation, the matrix-open state (m-state) is inhibited by the membrane-permeable bongkrekic acid (BKA). The cytoplasmic-open state (c-state) is inhibited by the membrane-impermeable toxic inhibitor carboxyatractyloside (CATR). Proton transporter activity is inhibited by ADP:ATP antiporter activity. ADP:ATP antiporter that mediates import of ADP into the mitochondrial matrix for ATP synthesis, and export of ATP out to fuel the cell. Cycles between the cytoplasmic-open state (c-state) and the matrix-open state (m-state): operates by the alternating access mechanism with a single substrate-binding site intermittently exposed to either the cytosolic (c-state) or matrix (m-state) side of the inner mitochondrial membrane. In addition to its ADP:ATP antiporter activity, also involved in mitochondrial uncoupling and mitochondrial permeability transition pore (mPTP) activity. Plays a role in mitochondrial uncoupling by acting as a proton transporter: proton transport uncouples the proton flows via the electron transport chain and ATP synthase to reduce the efficiency of ATP production and cause mitochondrial thermogenesis. Proton transporter activity is inhibited by ADP:ATP antiporter activity, suggesting that SLC25A4/ANT1 acts as a master regulator of mitochondrial energy output by maintaining a delicate balance between ATP production (ADP:ATP antiporter activity) and thermogenesis (proton transporter activity). Proton transporter activity requires free fatty acids as cofactor, but does not transport it. Also plays a key role in mPTP opening, a non-specific pore that enables free passage of the mitochondrial membranes to solutes of up to 1.5 kDa, and which contributes to cell death. It is however unclear if SLC25A4/ANT1 constitutes a pore-forming component of mPTP or regulates it. Acts as a regulator of mitophagy independently of ADP:ATP antiporter activity: promotes mitophagy via interaction with TIMM44, leading to inhibit the presequence translocase TIMM23, thereby promoting stabilization of PINK1. The sequence is that of ADP/ATP translocase 1 from Homo sapiens (Human).